The sequence spans 245 residues: Ureidoacrylate amidohydrolase RutB (245 aa).

D41 acts as the Proton acceptor in catalysis. Residue K150 is part of the active site. The Nucleophile role is filled by C183.

Belongs to the isochorismatase family. RutB subfamily.

The catalysed reaction is (Z)-3-ureidoacrylate + H2O + H(+) = (Z)-3-aminoacrylate + NH4(+) + CO2. It carries out the reaction (Z)-3-ureidoacrylate + H2O = (Z)-3-aminoacrylate + carbamate + H(+). It catalyses the reaction (Z)-2-methylureidoacrylate + H2O + H(+) = (Z)-2-methylaminoacrylate + NH4(+) + CO2. Hydrolyzes ureidoacrylate to form aminoacrylate and carbamate. The carbamate hydrolyzes spontaneously, thereby releasing one of the nitrogen atoms of the pyrimidine ring as ammonia and one of its carbon atoms as CO2. The sequence is that of Ureidoacrylate amidohydrolase RutB from Pseudomonas savastanoi pv. phaseolicola (strain 1448A / Race 6) (Pseudomonas syringae pv. phaseolicola (strain 1448A / Race 6)).